A 69-amino-acid chain; its full sequence is uncharacterized protein (69 aa).

A disordered region spans residues A23–V46. Basic and acidic residues predominate over residues E26–C44.

This is an uncharacterized protein from Homo sapiens (Human).